The following is a 1034-amino-acid chain: Ubiquitin-like-specific protease 2 (1034 aa).

Disordered regions lie at residues 1–42 (MSAR…FRKD), 71–110 (IELS…HSSL), 388–419 (SHAV…DDAT), 731–800 (IDQS…PIRH), 841–960 (GVSS…DSLG), and 983–1034 (SSPT…DEDP). A compositionally biased stretch (low complexity) spans 19-33 (SSRASSPRSSASLPP). The segment covering 74–85 (SDNDVDNNDEGE) has biased composition (acidic residues). Residues 743–756 (TSEPPCSRSSSIST) are compositionally biased toward low complexity. Serine 788 carries the phosphoserine modification. Composition is skewed to polar residues over residues 845 to 856 (PIKNDQALSSTH), 876 to 904 (QLSS…VISD), and 912 to 923 (GVNSESKNTSGI). Serine 903 carries the phosphoserine modification. Serine 983 and serine 984 each carry phosphoserine. The segment covering 992-1017 (TSATSKGSNAQLLSNYGDENNQSQDS) has biased composition (polar residues).

It belongs to the peptidase C48 family.

Its function is as follows. Insertion mutation in SMT4 confers temperature and benomyl sensitivity; high copy suppressor of a temperature sensitive mutation in MIF2. This is Ubiquitin-like-specific protease 2 (ULP2) from Saccharomyces cerevisiae (strain ATCC 204508 / S288c) (Baker's yeast).